The sequence spans 130 residues: Protein PELPK2 (130 aa).

A signal peptide spans 1–32 (MTLKKSFSASLLSPFLIICLIALLSVPVSVGA). Repeat copies occupy residues 47–51 (PELPK), 52–56 (PEMPK), 58–62 (PEFPK), 63–67 (LELPK), 69–73 (PEIPK), 74–78 (PEMPK), 80–84 (PEIQK), 91–95 (PELPK), 97–101 (PEFPK), 102–106 (FDFPK), 108–112 (PELPK), 113–117 (PEETK), and 121–125 (FTMPK). The segment at 47-125 (PELPKPEMPK…TKVPAFTMPK (79 aa)) is 13 X 5 AA tandem repeat of P-[DEGQ]-[AEFLIV]-[QPT]-K. Residues 71-84 (IPKPEMPKLPEIQK) are compositionally biased toward basic and acidic residues. Residues 71–130 (IPKPEMPKLPEIQKPELPTFPELPKMPEFPKFDFPKLPELPKPEETKVPAFTMPKFPGSP) are disordered. Positions 98–117 (EFPKFDFPKLPELPKPEETK) are enriched in basic and acidic residues.

It is found in the secreted. The protein localises to the cell wall. This chain is Protein PELPK2, found in Arabidopsis thaliana (Mouse-ear cress).